The primary structure comprises 301 residues: Putative two-component membrane permease complex subunit SMU_747c (301 aa).

8 helical membrane-spanning segments follow: residues 15–35 (LAIFLSIIIEALPFILLGAIL), 60–80 (ILFGTFVGFIFPSCECGIVPI), 97–117 (FLATAPIINPIVLFATFSAFG), 124–144 (FLRLFGAIIVAISLGILLGFI), 188–208 (YLIFGSFVAASMQIYVPTRIL), 211–231 (IGHNPLTAILIMMLLAFILSL), 238–258 (FIGTSLLATFGVAPVVAFLLI), and 278–298 (FILQFVGTSSLIIIIYCLIVG).

This sequence belongs to the UPF0718 family. Interacts with SMU_746c.

It localises to the cell membrane. In terms of biological role, could be part of a two-component membrane permease system responsible for amino acid transport under low pH. Involved in acidogenesis, biofilm formation and low-pH survival. In Streptococcus mutans serotype c (strain ATCC 700610 / UA159), this protein is Putative two-component membrane permease complex subunit SMU_747c.